The primary structure comprises 372 residues: 12-oxophytodienoate reductase 1 (372 aa).

The residue at position 1 (M1) is an N-acetylmethionine. FMN contacts are provided by residues 31-33, A64, and Q106; that span reads PLT. H183 contacts substrate. Y188 serves as the catalytic Proton donor. R235 serves as a coordination point for FMN. R275 contacts substrate. FMN contacts are provided by residues 303-305 and 326-327; these read AGG and GR.

This sequence belongs to the NADH:flavin oxidoreductase/NADH oxidase family. It depends on FMN as a cofactor. As to expression, mostly expressed in roots, also present in leaves, shoots and flowers. More abundant in cotyledons. In more details, expressed in peduncles, sepals, petals, around the abscission zone of siliques, maturing siliques and developing seeds.

It is found in the cytoplasm. The enzyme catalyses (1S,2S)-OPC-8 + NADP(+) = (9S,13S,15Z)-12-oxophyto-10,15-dienoate + NADPH + H(+). It functions in the pathway lipid metabolism; oxylipin biosynthesis. Its function is as follows. Specifically cleaves olefinic bonds in alpha,beta-unsaturated carbonyls and may be involved in detoxification or modification of these reactive compounds. May be involved in the biosynthesis or metabolism of oxylipin signaling molecules. In vitro, reduces 9R,13R-12-oxophytodienoic acid (9R,13R-OPDA) to 9R,13R-OPC-8:0, but only poorly 9S,13S-OPDA, the natural precursor of jasmonic acid. Can detoxify the explosive 2,4,6-trinitrotoluene (TNT) in vitro and in vivo by catalyzing its nitroreduction to form hydroxylamino-dinitrotoluene (HADNT). The polypeptide is 12-oxophytodienoate reductase 1 (Arabidopsis thaliana (Mouse-ear cress)).